Here is a 685-residue protein sequence, read N- to C-terminus: Mitotic interactor and substrate of PLK1 (685 aa).

A Phosphoserine; by CDK1 modification is found at Ser-78. 2 disordered regions span residues 155–181 and 207–253; these read SGTV…STPL and NKEV…QGKG. Phosphothreonine; by CDK1 is present on Thr-172. Thr-179 carries the phosphothreonine modification. Residue Ser-214 is modified to Phosphoserine; by CDK1. A Phosphothreonine modification is found at Thr-219. A Phosphoserine; by CDK1 modification is found at Ser-284. At Thr-287 the chain carries Phosphothreonine; by CDK1. Residues 345-499 form a disordered region; sequence GRPSLYVQRD…PWKLPRGSPQ (155 aa). The residue at position 348 (Ser-348) is a Phosphoserine. A compositionally biased stretch (basic and acidic residues) spans 355 to 371; sequence MVQETQREEDHRREGLH. Thr-377 is modified (phosphothreonine; by CDK1). Ser-382 carries the phosphoserine modification. The span at 392 to 417 shows a compositional bias: low complexity; the sequence is ALSSDSILSPDSILSPAPDARAADPA. 3 positions are modified to phosphoserine; by PLK1: Ser-394, Ser-395, and Ser-397. Ser-406 and Ser-436 each carry phosphoserine. Residues 454–469 are compositionally biased toward polar residues; it reads SGLSTVDTEAATSPKA. Ser-477 is modified (phosphoserine; by PLK1). Residues 478–488 show a composition bias toward polar residues; the sequence is ESSGKPMSTKQ. Phosphoserine is present on residues Ser-547 and Ser-549. Residues 551–575 adopt a coiled-coil conformation; the sequence is DLLERERESVLRREREVAEERRNAL. Disordered regions lie at residues 575–607 and 629–651; these read LFPE…SYSV and PVDS…NPSD. Ser-581 carries the post-translational modification Phosphoserine; by PLK1. Phosphothreonine is present on Thr-583. The span at 589-607 shows a compositional bias: polar residues; it reads DQNSRSSSQASGITGSYSV. Ser-592 carries the post-translational modification Phosphoserine; by PLK1. Residue Ser-681 is modified to Phosphoserine.

The protein belongs to the MISP family. As to quaternary structure, associates with F-actin. Interacts with DCTN1; this interaction regulates DCTN1 distribution at the cell cortex. Interacts with PTK2/FAK and MAPRE1. In terms of processing, phosphorylated by CDK1 and PLK1. CDK1 is the priming kinase for PLK1 phosphorylation. Phosphorylation by PLK1 is required for proper spindle orientation at metaphase.

Its subcellular location is the cell junction. The protein resides in the focal adhesion. It is found in the cytoplasm. The protein localises to the cytoskeleton. It localises to the cell cortex. In terms of biological role, plays a role in mitotic spindle orientation and mitotic progression. Regulates the distribution of dynactin at the cell cortex in a PLK1-dependent manner, thus stabilizing cortical and astral microtubule attachments required for proper mitotic spindle positioning. May link microtubules to the actin cytospkeleton and focal adhesions. May be required for directed cell migration and centrosome orientation. May also be necessary for proper stacking of the Golgi apparatus. The sequence is that of Mitotic interactor and substrate of PLK1 from Pongo abelii (Sumatran orangutan).